A 332-amino-acid polypeptide reads, in one-letter code: Protein pelota homolog (332 aa).

The protein belongs to the eukaryotic release factor 1 family. Pelota subfamily. Monomer. Requires a divalent metal cation as cofactor.

It localises to the cytoplasm. In terms of biological role, may function in recognizing stalled ribosomes, interact with stem-loop structures in stalled mRNA molecules, and effect endonucleolytic cleavage of the mRNA. May play a role in the release non-functional ribosomes and degradation of damaged mRNAs. Has endoribonuclease activity. The polypeptide is Protein pelota homolog (Pyrobaculum calidifontis (strain DSM 21063 / JCM 11548 / VA1)).